Reading from the N-terminus, the 201-residue chain is 3-isopropylmalate dehydratase small subunit (201 aa).

It belongs to the LeuD family. LeuD type 1 subfamily. In terms of assembly, heterodimer of LeuC and LeuD.

The enzyme catalyses (2R,3S)-3-isopropylmalate = (2S)-2-isopropylmalate. Its pathway is amino-acid biosynthesis; L-leucine biosynthesis; L-leucine from 3-methyl-2-oxobutanoate: step 2/4. Functionally, catalyzes the isomerization between 2-isopropylmalate and 3-isopropylmalate, via the formation of 2-isopropylmaleate. The polypeptide is 3-isopropylmalate dehydratase small subunit (Escherichia fergusonii (strain ATCC 35469 / DSM 13698 / CCUG 18766 / IAM 14443 / JCM 21226 / LMG 7866 / NBRC 102419 / NCTC 12128 / CDC 0568-73)).